A 487-amino-acid chain; its full sequence is Bifunctional cytokinin biosynthesis protein (487 aa).

The interval 1-266 is adenylate isopentenyltransferase; it reads MESTNRFMIG…RMASDFCYAS (266 aa). The segment at 267–487 is cytokinin riboside 5'-monophosphate phosphoribohydrolase; sequence TSISFHPINE…FSRKGELEWV (221 aa). Substrate contacts are provided by residues Glu352, 380–381, 403–409, and Thr415; these read RK and GYGTLEE.

In the N-terminal section; belongs to the IPP transferase family. This sequence in the C-terminal section; belongs to the LOG family.

It carries out the reaction dimethylallyl diphosphate + AMP = N(6)-(dimethylallyl)adenosine 5'-phosphate + diphosphate. The enzyme catalyses N(6)-(dimethylallyl)adenosine 5'-phosphate + H2O = N(6)-dimethylallyladenine + D-ribose 5-phosphate. The catalysed reaction is 9-ribosyl-trans-zeatin 5'-phosphate + H2O = trans-zeatin + D-ribose 5-phosphate. Its pathway is secondary metabolite biosynthesis. In terms of biological role, bifunctional cytokinin synthesis protein; part of the gene cluster that mediates the biosynthesis of cytokinins such as fusatin, fusatinic acids or 8-oxofusatin, known for their growth promoting and anti-senescence activities toward host plants. FCK1 is a bifunctional enzyme that performs the first steps in the biosynthesis of Fusarium cytokinins. It first condenses adenosine monophosphate (AMP) with dimethylallyl diphosphate (DMAPP) to yield isoprenyl adenosine monophosphate. It then catalyzes the removal of the phosphoribose to produce isopentenylaldehyde. The cytochrome P450 monooxygenase then converts isopentenylaldehyde to trans-zeatin. A condensation step converts trans-zeatin to fusatin which is further modified to produce fusatinic acid. The mechanism for oxidation of fusatin to fusatinic acid remains unknown. 8-oxofusatin could be produced through several pathways, via direct oxygenation of fusatin, or via the 8-oxo-pentenyladenine intermediate which itself must arise from either the prenylation of 8-oxo-AMP by FCK1 and/or oxygenation of isopentenylaldehyde. Both the FCK3 and FCK4 enzymes act downstream of the identified cytokinins to produce yet unidentified compounds. The polypeptide is Bifunctional cytokinin biosynthesis protein (Fusarium pseudograminearum (strain CS3096) (Wheat and barley crown-rot fungus)).